Consider the following 136-residue polypeptide: Group 1 truncated hemoglobin GlbN (136 aa).

Residue histidine 81 coordinates heme.

This sequence belongs to the truncated hemoglobin family. Group I subfamily. In terms of assembly, homodimer. Heme serves as cofactor.

Functionally, binds oxygen cooperatively with very high affinity because of a fast combination and a slow dissociation rate. The protein is Group 1 truncated hemoglobin GlbN (glbN) of Mycolicibacterium paratuberculosis (strain ATCC BAA-968 / K-10) (Mycobacterium paratuberculosis).